Reading from the N-terminus, the 115-residue chain is Phosphoribosyl-AMP cyclohydrolase (115 aa).

Asp80 is a binding site for Mg(2+). Cys81 is a binding site for Zn(2+). Residues Asp82 and Asp84 each contribute to the Mg(2+) site. 2 residues coordinate Zn(2+): Cys97 and Cys104.

The protein belongs to the PRA-CH family. Homodimer. Requires Mg(2+) as cofactor. Zn(2+) serves as cofactor.

The protein localises to the cytoplasm. The enzyme catalyses 1-(5-phospho-beta-D-ribosyl)-5'-AMP + H2O = 1-(5-phospho-beta-D-ribosyl)-5-[(5-phospho-beta-D-ribosylamino)methylideneamino]imidazole-4-carboxamide. Its pathway is amino-acid biosynthesis; L-histidine biosynthesis; L-histidine from 5-phospho-alpha-D-ribose 1-diphosphate: step 3/9. Functionally, catalyzes the hydrolysis of the adenine ring of phosphoribosyl-AMP. This chain is Phosphoribosyl-AMP cyclohydrolase, found in Mycolicibacterium smegmatis (strain ATCC 700084 / mc(2)155) (Mycobacterium smegmatis).